A 319-amino-acid polypeptide reads, in one-letter code: Olfactory receptor 8U8 (319 aa).

The Extracellular portion of the chain corresponds to 1 to 28 (MAHINCTQATEFILVGLTDHQELKMPLF). An N-linked (GlcNAc...) asparagine glycan is attached at asparagine 5. Residues 29 to 49 (VLFLSIYLFTVVGNLGLILLI) form a helical membrane-spanning segment. Over 50–56 (RADTSLN) the chain is Cytoplasmic. Residues 57–77 (TPMYFFLSNLAFVDFCYSSVI) form a helical membrane-spanning segment. Residues 78-97 (TPKMLGNFLYKQNVISFDAC) are Extracellular-facing. Cysteine 97 and cysteine 179 are disulfide-bonded. Residues 98-118 (ATQLGCFLTFMVSESLLLASM) traverse the membrane as a helical segment. Topologically, residues 119–122 (AYDR) are cytoplasmic. A helical transmembrane segment spans residues 123–143 (YVAICNPLLYMVVMTPGICIQ). Topologically, residues 144-204 (LVAVPYSYSF…KQLWILACAG (61 aa)) are extracellular. A helical membrane pass occupies residues 205 to 225 (ITFICSVLIVFVSYMFIIFAI). Topologically, residues 226-239 (LRMSSAEGRRKAFS) are cytoplasmic. A helical membrane pass occupies residues 240-260 (TCSSHMLAVTIFYGTLIFMYL). Residues 261-271 (QPSSSHSLDAD) are Extracellular-facing. The chain crosses the membrane as a helical span at residues 272-292 (KMASVFYTVIIPMLNPLIYSL). Residues 293-319 (RNKDVKDALKKVIINRNHAFIFLKLRK) are Cytoplasmic-facing.

The protein belongs to the G-protein coupled receptor 1 family.

It localises to the cell membrane. Functionally, odorant receptor. This is Olfactory receptor 8U8 (OR8U8) from Homo sapiens (Human).